The sequence spans 430 residues: Glutamate-1-semialdehyde 2,1-aminomutase (430 aa).

Lys265 carries the N6-(pyridoxal phosphate)lysine modification.

The protein belongs to the class-III pyridoxal-phosphate-dependent aminotransferase family. HemL subfamily. As to quaternary structure, homodimer. Requires pyridoxal 5'-phosphate as cofactor.

It is found in the cytoplasm. The enzyme catalyses (S)-4-amino-5-oxopentanoate = 5-aminolevulinate. Its pathway is porphyrin-containing compound metabolism; protoporphyrin-IX biosynthesis; 5-aminolevulinate from L-glutamyl-tRNA(Glu): step 2/2. In Helicobacter pylori (strain ATCC 700392 / 26695) (Campylobacter pylori), this protein is Glutamate-1-semialdehyde 2,1-aminomutase (hemL).